The sequence spans 664 residues: ATP-dependent RNA helicase MSS116, mitochondrial (664 aa).

The N-terminal 26 residues, 1–26 (MLTSILIKGRTPVLASRNLLAALSNC), are a transit peptide targeting the mitochondrion. The interval 42–79 (NRDQRNFGRNQRNNNSNRYRNSRFNSRPRTRSREDDDE) is disordered. Positions 48–68 (FGRNQRNNNSNRYRNSRFNSR) are enriched in low complexity. Positions 106-134 (SLLEEGVLDKEIHKAITRMEFPGLTPVQQ) match the Q motif motif. The Helicase ATP-binding domain occupies 139-326 (PILSSEDHDV…NNIMNKKECL (188 aa)). Residue 152 to 159 (AKTGTGKT) participates in ATP binding. The DEAD box motif lies at 267–270 (DEAD). The Helicase C-terminal domain maps to 355–512 (SIFAAVEHIK…EKYEPSEEIK (158 aa)). Residues 602 to 664 (GNNKSYDYDD…NYSSRNSNIY (63 aa)) are disordered. A compositionally biased stretch (basic and acidic residues) spans 628 to 638 (QNRDYDDEPFR). Residues 639–649 (RSNNNRRSFSR) are compositionally biased toward low complexity. Positions 653–664 (KNNYSSRNSNIY) are enriched in polar residues.

This sequence belongs to the DEAD box helicase family. DDX18/HAS1 subfamily.

Its subcellular location is the mitochondrion matrix. It catalyses the reaction ATP + H2O = ADP + phosphate + H(+). Its function is as follows. ATP-dependent RNA helicase required for mitochondrial splicing of group I and II introns. Specifically involved in the ATP-dependent splicing of the bl1 intron of COB. Also required for efficient mitochondrial translation. The protein is ATP-dependent RNA helicase MSS116, mitochondrial (MSS116) of Saccharomyces cerevisiae (strain ATCC 204508 / S288c) (Baker's yeast).